The following is a 363-amino-acid chain: Autophagy-related protein 3 (363 aa).

Basic and acidic residues-rich tracts occupy residues 84 to 106 and 129 to 138; these read DFAG…RGDG and ARVRDVRTVD. A flexible region region spans residues 84–171; the sequence is DFAGDAGHDE…DDEAIIRDPK (88 aa). The disordered stretch occupies residues 84 to 174; the sequence is DFAGDAGHDE…AIIRDPKADN (91 aa). Positions 139–164 are enriched in acidic residues; sequence ESGEMGEREDDEDDIPDMEDDDDDDE. Cysteine 247 acts as the Glycyl thioester intermediate in catalysis. Positions 251-339 are handle region; it reads SVMKTLLDRA…EEEVAIRVDQ (89 aa).

It belongs to the ATG3 family. In terms of assembly, monomer. Interacts with atg8 through an intermediate thioester bond through the C-terminal Gly of atg8. Interacts with the C-terminal region of the E1-like atg7 enzyme. Also interacts with the atg12-atg5 conjugate.

It is found in the cytoplasm. Functionally, E2 conjugating enzyme required for the cytoplasm to vacuole transport (Cvt) and autophagy. Required for selective autophagic degradation of the nucleus (nucleophagy) as well as for mitophagy which contributes to regulate mitochondrial quantity and quality by eliminating the mitochondria to a basal level to fulfill cellular energy requirements and preventing excess ROS production. Responsible for the E2-like covalent binding of phosphatidylethanolamine to the C-terminal Gly of atg8. The atg12-atg5 conjugate plays a role of an E3 and promotes the transfer of atg8 from atg3 to phosphatidylethanolamine (PE). This step is required for the membrane association of atg8. The formation of the atg8-phosphatidylethanolamine conjugate is essential for autophagy and for the cytoplasm to vacuole transport (Cvt). The atg8-PE conjugate mediates tethering between adjacent membranes and stimulates membrane hemifusion, leading to expansion of the autophagosomal membrane during autophagy. Required for normal mycelial growth and conidiogenesis, and regulates sclerotial formation. Plays an essential role in pathogenesis. This chain is Autophagy-related protein 3, found in Botryotinia fuckeliana (strain BcDW1) (Noble rot fungus).